The sequence spans 344 residues: Anthranilate phosphoribosyltransferase (344 aa).

Residues G86, 89-90, T94, 96-99, 114-122, and S126 each bind 5-phospho-alpha-D-ribose 1-diphosphate; these read GD, NIST, and KHGNKSASG. G86 serves as a coordination point for anthranilate. S98 lines the Mg(2+) pocket. N117 lines the anthranilate pocket. R172 serves as a coordination point for anthranilate. D231 and E232 together coordinate Mg(2+).

This sequence belongs to the anthranilate phosphoribosyltransferase family. As to quaternary structure, homodimer. Mg(2+) serves as cofactor.

It carries out the reaction N-(5-phospho-beta-D-ribosyl)anthranilate + diphosphate = 5-phospho-alpha-D-ribose 1-diphosphate + anthranilate. It functions in the pathway amino-acid biosynthesis; L-tryptophan biosynthesis; L-tryptophan from chorismate: step 2/5. Functionally, catalyzes the transfer of the phosphoribosyl group of 5-phosphorylribose-1-pyrophosphate (PRPP) to anthranilate to yield N-(5'-phosphoribosyl)-anthranilate (PRA). This chain is Anthranilate phosphoribosyltransferase, found in Prochlorococcus marinus (strain MIT 9301).